We begin with the raw amino-acid sequence, 207 residues long: Proteasome subunit beta (207 aa).

Positions 1-9 are cleaved as a propeptide — removed in mature form; by autocatalysis; it reads MSNKNTFEG. Residue T10 is the Nucleophile of the active site.

The protein belongs to the peptidase T1B family. In terms of assembly, the 20S proteasome core is composed of 14 alpha and 14 beta subunits that assemble into four stacked heptameric rings, resulting in a barrel-shaped structure. The two inner rings, each composed of seven catalytic beta subunits, are sandwiched by two outer rings, each composed of seven alpha subunits. The catalytic chamber with the active sites is on the inside of the barrel. Has a gated structure, the ends of the cylinder being occluded by the N-termini of the alpha-subunits. Is capped at one or both ends by the proteasome regulatory ATPase, PAN.

It localises to the cytoplasm. It carries out the reaction Cleavage of peptide bonds with very broad specificity.. Its activity is regulated as follows. The formation of the proteasomal ATPase PAN-20S proteasome complex, via the docking of the C-termini of PAN into the intersubunit pockets in the alpha-rings, triggers opening of the gate for substrate entry. Interconversion between the open-gate and close-gate conformations leads to a dynamic regulation of the 20S proteasome proteolysis activity. Functionally, component of the proteasome core, a large protease complex with broad specificity involved in protein degradation. This chain is Proteasome subunit beta, found in Methanobrevibacter ruminantium (strain ATCC 35063 / DSM 1093 / JCM 13430 / OCM 146 / M1) (Methanobacterium ruminantium).